Consider the following 348-residue polypeptide: GPALPP motifs-containing protein 1 (348 aa).

Disordered regions lie at residues 1-163 and 177-317; these read MARD…AKGP and QRMK…DLKV. At alanine 2 the chain carries N-acetylalanine. A GPALPP motif 1 motif is present at residues 7–12; it reads GPALPP. Basic and acidic residues predominate over residues 14–27; sequence FKERATVEDQERDP. Serine 28 is modified (phosphoserine). The short motif at 32-37 is the GPALPP motif 2 element; sequence GPALPP. The span at 41–59 shows a compositional bias: low complexity; sequence SSSSDSSDSNEDSSSLSEE. The segment covering 60–69 has biased composition (acidic residues); it reads GNQESEEDDA. Residues 93 to 98 carry the GPALPP motif 3 motif; it reads GPALPP. The residue at position 106 (serine 106) is a Phosphoserine. Over residues 108–117 the composition is skewed to pro residues; the sequence is PRPIIGPALP. The GPALPP motif 4 motif lies at 113 to 118; that stretch reads GPALPP. Serine 138, serine 143, and serine 148 each carry phosphoserine. Acidic residues predominate over residues 144–154; that stretch reads EEAESGEDEDI. 4 stretches are compositionally biased toward basic and acidic residues: residues 177–195, 235–269, 277–287, and 295–317; these read QRMK…KPVT, PADR…KRLA, ESKRSESLMDI, and KAAE…DLKV. Glycyl lysine isopeptide (Lys-Gly) (interchain with G-Cter in SUMO2) cross-links involve residues lysine 279 and lysine 316.

This Rattus norvegicus (Rat) protein is GPALPP motifs-containing protein 1 (Gpalpp1).